The primary structure comprises 526 residues: Seipin-2 (526 aa).

Residues 33–77 (PIRSNSHQPSSLLRRRKSAHRRDLISSDIETEPSSSSDGFDVGEK) are disordered. A compositionally biased stretch (low complexity) spans 58–70 (SSDIETEPSSSSD). The next 4 membrane-spanning stretches (helical) occupy residues 195–215 (SLLT…FDPF), 224–243 (FLMA…MNPF), 258–278 (FGWG…LLVS), and 483–503 (LFVW…LVCC).

It belongs to the seipin family. As to expression, expressed in seeds, seedlings, leaves, stems and roots. Not detected in flowers.

It localises to the endoplasmic reticulum membrane. Its function is as follows. Involved in lipid metabolism and lipid droplet (LD) morphology, number, and size. Supports the formation of small-sized LDs and modulates triacylglycerol accumulation. Induces probably a reorganization of the endoplasmic reticulum into LD-forming domains. The polypeptide is Seipin-2 (Arabidopsis thaliana (Mouse-ear cress)).